A 227-amino-acid polypeptide reads, in one-letter code: Translation initiation factor 6 (227 aa).

It belongs to the eIF-6 family.

Binds to the 50S ribosomal subunit and prevents its association with the 30S ribosomal subunit to form the 70S initiation complex. The sequence is that of Translation initiation factor 6 from Methanococcus maripaludis (strain DSM 14266 / JCM 13030 / NBRC 101832 / S2 / LL).